Consider the following 484-residue polypeptide: ATP synthase subunit beta (484 aa).

G168–T175 is a binding site for ATP.

It belongs to the ATPase alpha/beta chains family. F-type ATPases have 2 components, CF(1) - the catalytic core - and CF(0) - the membrane proton channel. CF(1) has five subunits: alpha(3), beta(3), gamma(1), delta(1), epsilon(1). CF(0) has three main subunits: a(1), b(2) and c(9-12). The alpha and beta chains form an alternating ring which encloses part of the gamma chain. CF(1) is attached to CF(0) by a central stalk formed by the gamma and epsilon chains, while a peripheral stalk is formed by the delta and b chains.

Its subcellular location is the cell membrane. The catalysed reaction is ATP + H2O + 4 H(+)(in) = ADP + phosphate + 5 H(+)(out). Functionally, produces ATP from ADP in the presence of a proton gradient across the membrane. The catalytic sites are hosted primarily by the beta subunits. The sequence is that of ATP synthase subunit beta from Arthrobacter sp. (strain FB24).